Here is a 361-residue protein sequence, read N- to C-terminus: Phospho-N-acetylmuramoyl-pentapeptide-transferase (361 aa).

The next 10 membrane-spanning stretches (helical) occupy residues arginine 25 to isoleucine 45, threonine 73 to leucine 93, valine 98 to isoleucine 118, isoleucine 139 to threonine 159, isoleucine 168 to phenylalanine 188, glycine 200 to serine 220, alanine 237 to phenylalanine 257, valine 264 to isoleucine 284, valine 290 to valine 310, and valine 339 to lysine 359.

The protein belongs to the glycosyltransferase 4 family. MraY subfamily. The cofactor is Mg(2+).

Its subcellular location is the cell inner membrane. The enzyme catalyses UDP-N-acetyl-alpha-D-muramoyl-L-alanyl-gamma-D-glutamyl-meso-2,6-diaminopimeloyl-D-alanyl-D-alanine + di-trans,octa-cis-undecaprenyl phosphate = di-trans,octa-cis-undecaprenyl diphospho-N-acetyl-alpha-D-muramoyl-L-alanyl-D-glutamyl-meso-2,6-diaminopimeloyl-D-alanyl-D-alanine + UMP. Its pathway is cell wall biogenesis; peptidoglycan biosynthesis. In terms of biological role, catalyzes the initial step of the lipid cycle reactions in the biosynthesis of the cell wall peptidoglycan: transfers peptidoglycan precursor phospho-MurNAc-pentapeptide from UDP-MurNAc-pentapeptide onto the lipid carrier undecaprenyl phosphate, yielding undecaprenyl-pyrophosphoryl-MurNAc-pentapeptide, known as lipid I. This Xanthomonas euvesicatoria pv. vesicatoria (strain 85-10) (Xanthomonas campestris pv. vesicatoria) protein is Phospho-N-acetylmuramoyl-pentapeptide-transferase.